A 663-amino-acid polypeptide reads, in one-letter code: DNA ligase 1 (663 aa).

Residues 28-32 and 76-77 contribute to the NAD(+) site; these read DKEYD and SL. Catalysis depends on K118, which acts as the N6-AMP-lysine intermediate. Residues R139, E173, and K310 each contribute to the NAD(+) site. The Zn(2+) site is built by C403, C406, C419, and C425. A BRCT domain is found at 583 to 663; that stretch reads VSESVFNDKT…KFEELIESVK (81 aa).

This sequence belongs to the NAD-dependent DNA ligase family. LigA subfamily. Mg(2+) is required as a cofactor. Requires Mn(2+) as cofactor.

The enzyme catalyses NAD(+) + (deoxyribonucleotide)n-3'-hydroxyl + 5'-phospho-(deoxyribonucleotide)m = (deoxyribonucleotide)n+m + AMP + beta-nicotinamide D-nucleotide.. Functionally, DNA ligase that catalyzes the formation of phosphodiester linkages between 5'-phosphoryl and 3'-hydroxyl groups in double-stranded DNA using NAD as a coenzyme and as the energy source for the reaction. It is essential for DNA replication and repair of damaged DNA. This Clostridium acetobutylicum (strain ATCC 824 / DSM 792 / JCM 1419 / IAM 19013 / LMG 5710 / NBRC 13948 / NRRL B-527 / VKM B-1787 / 2291 / W) protein is DNA ligase 1.